A 763-amino-acid chain; its full sequence is Protein CHROMATIN REMODELING 19 (763 aa).

Disordered stretches follow at residues 1–43 (MKRD…TPSI) and 114–149 (EDEE…RGED). Residues 23-34 (VLKRPRTPKKTR) are compositionally biased toward basic residues. Acidic residues predominate over residues 114-135 (EDEEASDDDDDEAESSASEDEF). Residues 226–404 (LLYKKGIEGA…WSLLEFMLPD (179 aa)) form the Helicase ATP-binding domain. 239–246 (DEMGLGKT) is an ATP binding site. The short motif at 353 to 356 (DEAH) is the DEAH box element. A coiled-coil region spans residues 462 to 482 (RKQEDAYKEAIEEYRAASQAR). A Nuclear localization signal motif is present at residues 520 to 527 (IRRIYSDE). A Helicase C-terminal domain is found at 592–742 (TLAELLPSMK…AAVLESGVHV (151 aa)).

The protein belongs to the SNF2/RAD54 helicase family. Interacts with SUVR2 and itself.

The protein localises to the nucleus. Its function is as follows. DNA helicase that possesses intrinsic ATP-dependent nucleosome-remodeling activity and is both required for DNA repair and heterochromatin organization. Promotes DNA end resection of double-strand breaks (DSBs) following DNA damage: probably acts by weakening histone DNA interactions in nucleosomes flanking DSBs. Probable chromatin remodeling factor. Probable helicase-like transcription factor involved in transcriptional gene silencing. Associates with SUVR2 and contributes to transcriptional gene silencing at RNA-directed DNA methylation (RdDM) target loci but also at RdDM-independent target loci. May be involved in nucleosome positioning to form ordered nucleosome arrays on chromatin. The protein is Protein CHROMATIN REMODELING 19 of Arabidopsis thaliana (Mouse-ear cress).